The sequence spans 287 residues: 4-diphosphocytidyl-2-C-methyl-D-erythritol kinase (287 aa).

Lysine 11 is a catalytic residue. An ATP-binding site is contributed by 93-103; the sequence is PFGAGLGGGSS. The active site involves aspartate 135.

Belongs to the GHMP kinase family. IspE subfamily.

The enzyme catalyses 4-CDP-2-C-methyl-D-erythritol + ATP = 4-CDP-2-C-methyl-D-erythritol 2-phosphate + ADP + H(+). Its pathway is isoprenoid biosynthesis; isopentenyl diphosphate biosynthesis via DXP pathway; isopentenyl diphosphate from 1-deoxy-D-xylulose 5-phosphate: step 3/6. In terms of biological role, catalyzes the phosphorylation of the position 2 hydroxy group of 4-diphosphocytidyl-2C-methyl-D-erythritol. The sequence is that of 4-diphosphocytidyl-2-C-methyl-D-erythritol kinase from Chlorobium luteolum (strain DSM 273 / BCRC 81028 / 2530) (Pelodictyon luteolum).